We begin with the raw amino-acid sequence, 163 residues long: Large ribosomal subunit protein bL19 (163 aa).

Over residues 131–150 (ISQERKASGKDQASKPEVRP) the composition is skewed to basic and acidic residues. The interval 131-163 (ISQERKASGKDQASKPEVRPQGKKPAPKPKAKK) is disordered. Basic residues predominate over residues 151–163 (QGKKPAPKPKAKK).

Belongs to the bacterial ribosomal protein bL19 family.

This protein is located at the 30S-50S ribosomal subunit interface and may play a role in the structure and function of the aminoacyl-tRNA binding site. The polypeptide is Large ribosomal subunit protein bL19 (Rhodospirillum rubrum (strain ATCC 11170 / ATH 1.1.1 / DSM 467 / LMG 4362 / NCIMB 8255 / S1)).